We begin with the raw amino-acid sequence, 904 residues long: Disintegrin and metalloproteinase domain-containing protein 22 (904 aa).

An N-terminal signal peptide occupies residues Met1–Cys23. The propeptide occupies Gly24–Arg223. Residues Gly24–Asn734 lie on the Extracellular side of the membrane. The N-linked (GlcNAc...) asparagine glycan is linked to Asn163. A Peptidase M12B domain is found at Lys237–Pro436. Intrachain disulfides connect Cys347–Cys431, Cys390–Cys415, Cys392–Cys399, Cys445–Cys475, Cys456–Cys472, Cys458–Cys464, Cys471–Cys492, Cys483–Cys489, Cys488–Cys514, Cys501–Cys521, Cys508–Cys540, Cys533–Cys545, Cys552–Cys603, Cys567–Cys633, Cys581–Cys591, Cys598–Cys661, and Cys655–Cys666. The 88-residue stretch at Pro442–Asp529 folds into the Disintegrin domain. Asn517 carries N-linked (GlcNAc...) asparagine glycosylation. A glycan (N-linked (GlcNAc...) asparagine) is linked at Asn632. The N-linked (GlcNAc...) asparagine glycan is linked to Asn673. The 38-residue stretch at Asn673 to Gly710 folds into the EGF-like domain. 3 cysteine pairs are disulfide-bonded: Cys677/Cys692, Cys686/Cys698, and Cys700/Cys709. A helical membrane pass occupies residues Ile735–Ala755. Topologically, residues Trp756–Glu857 are cytoplasmic. Positions Gln769–Ile904 are disordered. The span at Gly789 to Ser808 shows a compositional bias: low complexity. A phosphoserine mark is found at Ser808, Lys817, and Ser832. Basic and acidic residues predominate over residues Trp809 to Arg827. The segment covering Asn840–Pro851 has biased composition (basic residues). 5 positions are modified to phosphoserine: Ser855, Ser860, Ser864, Ser868, and Met882. Residues Ser860–Ser875 show a composition bias toward low complexity.

In terms of assembly, interacts with LGI1. Can bind to LGI4. Interacts with KCNA2, DLG2 and DLG4. Interacts with ADAM11. Interacts (via C-terminus) with YWHAB/14-3-3 beta. Interacts (via C-terminus) with YWHAZ/14-3-3 zeta. In terms of processing, the precursor is cleaved by a furin endopeptidase. Detected in juxtaparanodal zones in the central nervous system and at nerve terminal plexuses of basket cells in the cerebellum (at protein level). Expressed at high levels in the brain. Strongly expressed in cerebellar granule cells and hippocampus. In spinal cord, expression is restricted to gray matter.

The protein resides in the cell membrane. Its subcellular location is the cell projection. The protein localises to the axon. Its function is as follows. Probable ligand for integrin in the brain. This is a non catalytic metalloprotease-like protein. Involved in regulation of cell adhesion and spreading and in inhibition of cell proliferation. Neuronal receptor for LGI1. This Mus musculus (Mouse) protein is Disintegrin and metalloproteinase domain-containing protein 22 (Adam22).